Reading from the N-terminus, the 44-residue chain is Antibacterial protein 3 homolog (44 aa).

The protein belongs to the staphylococcal hemolytic protein family.

The protein localises to the secreted. In terms of biological role, has hemolytic activity and also inhibits the growth of gonococci. This Staphylococcus haemolyticus (strain JCSC1435) protein is Antibacterial protein 3 homolog.